Reading from the N-terminus, the 130-residue chain is Small ribosomal subunit protein uS11 (130 aa).

Belongs to the universal ribosomal protein uS11 family. Part of the 30S ribosomal subunit. Interacts with proteins S7 and S18. Binds to IF-3.

Located on the platform of the 30S subunit, it bridges several disparate RNA helices of the 16S rRNA. Forms part of the Shine-Dalgarno cleft in the 70S ribosome. This is Small ribosomal subunit protein uS11 from Alkalilimnicola ehrlichii (strain ATCC BAA-1101 / DSM 17681 / MLHE-1).